Reading from the N-terminus, the 164-residue chain is HTH-type transcriptional regulator IscR (164 aa).

Residues 2–131 form the HTH rrf2-type domain; sequence RLTSKGRYAV…NNITLAELVN (130 aa). Positions 28 to 51 form a DNA-binding region, H-T-H motif; the sequence is LADISERQGISLSYLEQLFSRLRK. [2Fe-2S] cluster is bound by residues cysteine 92, cysteine 98, and cysteine 104. Positions 143–164 are disordered; sequence NNDTRRTANGRPQETINVNLRA. Residues 152-164 show a composition bias toward polar residues; sequence GRPQETINVNLRA.

[2Fe-2S] cluster is required as a cofactor.

In terms of biological role, regulates the transcription of several operons and genes involved in the biogenesis of Fe-S clusters and Fe-S-containing proteins. The chain is HTH-type transcriptional regulator IscR from Yersinia enterocolitica serotype O:8 / biotype 1B (strain NCTC 13174 / 8081).